A 330-amino-acid chain; its full sequence is tRNA U34 carboxymethyltransferase (330 aa).

Carboxy-S-adenosyl-L-methionine-binding positions include K91, W105, K110, G130, D152–S154, I181–E182, M196, Y200, and R315.

This sequence belongs to the class I-like SAM-binding methyltransferase superfamily. CmoB family. As to quaternary structure, homotetramer.

The catalysed reaction is carboxy-S-adenosyl-L-methionine + 5-hydroxyuridine(34) in tRNA = 5-carboxymethoxyuridine(34) in tRNA + S-adenosyl-L-homocysteine + H(+). Catalyzes carboxymethyl transfer from carboxy-S-adenosyl-L-methionine (Cx-SAM) to 5-hydroxyuridine (ho5U) to form 5-carboxymethoxyuridine (cmo5U) at position 34 in tRNAs. This is tRNA U34 carboxymethyltransferase from Shewanella loihica (strain ATCC BAA-1088 / PV-4).